We begin with the raw amino-acid sequence, 313 residues long: Olfactory receptor 1M1 (313 aa).

The Extracellular segment spans residues 1–25 (MEPRNQTSASQFILLGLSEKPEQET). The N-linked (GlcNAc...) asparagine glycan is linked to Asn5. Residues 26–49 (LLFSLFFCMYLVMVVGNLLIILAI) traverse the membrane as a helical segment. Over 50–57 (SIDSHLHT) the chain is Cytoplasmic. A helical transmembrane segment spans residues 58 to 79 (PMYFFLANLSLVDFCLATNTIP). Topologically, residues 80 to 100 (KMLVSLQTGSKAISYPCCLIQ) are extracellular. Residues Cys97 and Cys189 are joined by a disulfide bond. A helical membrane pass occupies residues 101–120 (MYFFHFFGIVDSVIIAMMAY). The Cytoplasmic portion of the chain corresponds to 121-139 (DRFVAICHPLHYAKIMSLR). A helical membrane pass occupies residues 140 to 158 (LCRLLVGALWAFSCFISLT). Topologically, residues 159-196 (HILLMARLVFCGSHEVPHYFCDLTPILRLSCTDTSVNR) are extracellular. The helical transmembrane segment at 197-219 (IFILIVAGMVIATPFVCILASYA) threads the bilayer. At 220-236 (RILVAIMKVPSAGGRKK) the chain is on the cytoplasmic side. The helical transmembrane segment at 237–259 (AFSTCSSHLSVVALFYGTTIGVY) threads the bilayer. The Extracellular segment spans residues 260 to 272 (LCPSSVLTTVKEK). Residues 273-292 (ASAVMYTAVTPMLNPFIYSL) traverse the membrane as a helical segment. Residues 293–313 (RNRDLKGALRKLVNRKITSSS) lie on the Cytoplasmic side of the membrane.

It belongs to the G-protein coupled receptor 1 family.

It is found in the cell membrane. Odorant receptor. This Homo sapiens (Human) protein is Olfactory receptor 1M1.